The sequence spans 102 residues: Small ribosomal subunit protein uS10 (102 aa).

This sequence belongs to the universal ribosomal protein uS10 family. Part of the 30S ribosomal subunit.

Its function is as follows. Involved in the binding of tRNA to the ribosomes. In Acidiphilium cryptum (strain JF-5), this protein is Small ribosomal subunit protein uS10.